The primary structure comprises 369 residues: Coiled-coil domain-containing protein 149 (369 aa).

A coiled-coil region spans residues 1-249 (MKENNNAEIL…AKYKQMAEAV (249 aa)).

The protein belongs to the CCDC149 family. Expressed in amphid and phasmid ciliated neurons, and also pharyngeal, touch receptor and motor neurons.

The protein resides in the cell projection. The protein localises to the cilium. The chain is Coiled-coil domain-containing protein 149 from Caenorhabditis elegans.